A 648-amino-acid chain; its full sequence is p-hydroxybenzoic acid efflux pump subunit AaeB (648 aa).

The next 11 helical transmembrane spans lie at phenylalanine 11–leucine 31, alanine 41–isoleucine 61, glycine 65–isoleucine 87, leucine 91–leucine 110, threonine 125–leucine 145, glutamate 150–valine 170, leucine 369–valine 389, phenylalanine 406–proline 426, glutamine 430–valine 450, methionine 458–isoleucine 478, and phenylalanine 481–valine 501.

Belongs to the aromatic acid exporter ArAE (TC 2.A.85) family.

It localises to the cell inner membrane. In terms of biological role, forms an efflux pump with AaeA. Could function as a metabolic relief valve, allowing to eliminate certain compounds when they accumulate to high levels in the cell. This Edwardsiella ictaluri (strain 93-146) protein is p-hydroxybenzoic acid efflux pump subunit AaeB.